Consider the following 266-residue polypeptide: Chorismate mutase (266 aa).

Positions 7-263 constitute a Chorismate mutase domain; it reads MADSERALNL…EVEYLMQRLI (257 aa). L-tyrosine-binding residues include Arg-77, Arg-78, Asn-144, Gly-146, Ser-147, and Thr-150. Asn-144, Gly-146, and Ser-147 together coordinate L-tryptophan.

Homodimer.

It localises to the cytoplasm. The catalysed reaction is chorismate = prephenate. The protein operates within metabolic intermediate biosynthesis; prephenate biosynthesis; prephenate from chorismate: step 1/1. With respect to regulation, each dimer has two allosteric binding sites that can bind the regulatory effectors tryptophan or tyrosine. Can bind either one tryptophan or one tyrosine, two tryptophan or two tyrosine or one tryptophan and one tyrosine, which differentially affect the catalytic activity. Activated by tryptophan and subject to feedback inhibition by tyrosine. In the presence of both tryptophan and tyrosine, the enzyme is in the activated state. In terms of biological role, catalyzes the Claisen rearrangement of chorismate to prephenate. Acts at the first branch point in the aromatic amino acid pathway where it steers biosynthesis towards phenylalanine and tyrosine, and away from tryptophan. This chain is Chorismate mutase, found in Trichoderma parareesei (Filamentous fungus).